A 55-amino-acid polypeptide reads, in one-letter code: Large ribosomal subunit protein bL33 (55 aa).

The protein belongs to the bacterial ribosomal protein bL33 family.

The sequence is that of Large ribosomal subunit protein bL33 from Acidiphilium cryptum (strain JF-5).